The primary structure comprises 133 residues: Fatty acid-binding protein, heart (133 aa).

Residue V2 is modified to N-acetylvaline. T8 is modified (phosphothreonine). Y20 carries the post-translational modification Phosphotyrosine; by Tyr-kinases. S23 carries the post-translational modification Phosphoserine. T30 is modified (phosphothreonine). S83 is modified (phosphoserine). Residue 127–129 (RTY) participates in (9Z)-octadecenoate binding. Hexadecanoate is bound at residue 127–129 (RTY). 127-129 (RTY) contacts octadecanoate.

Belongs to the calycin superfamily. Fatty-acid binding protein (FABP) family.

Its subcellular location is the cytoplasm. FABPs are thought to play a role in the intracellular transport of long-chain fatty acids and their acyl-CoA esters. The protein is Fatty acid-binding protein, heart (FABP3) of Sus scrofa (Pig).